The primary structure comprises 291 residues: Protein pxr1 (291 aa).

Residues 1-11 show a composition bias toward basic residues; the sequence is MGLAAPRKRTK. 2 disordered regions span residues 1-26 and 146-268; these read MGLA…RSTD and LVPP…FRGR. 2 stretches are compositionally biased toward polar residues: residues 15-25 and 146-156; these read DPNNTTWSRST and LVPPTSQNGQA. The region spanning 25-79 is the G-patch domain; sequence TDGFGHRILKAQGWTPGSFLGPRNAAHSDLFTTASASHIRVVLKDDNLGLGARPK. A compositionally biased stretch (basic and acidic residues) spans 194–205; sequence ETNSRGSREKER. A compositionally biased stretch (basic residues) spans 206-219; the sequence is KREKRQMRRDKKRK. Residues 230–247 show a composition bias toward basic and acidic residues; the sequence is MQEKTRVQGPSEDVKPTE.

Belongs to the PINX1 family.

Its subcellular location is the nucleus. The protein localises to the nucleolus. Involved in rRNA-processing at A0, A1 and A2 sites and negatively regulates telomerase. The chain is Protein pxr1 (pxr1) from Aspergillus clavatus (strain ATCC 1007 / CBS 513.65 / DSM 816 / NCTC 3887 / NRRL 1 / QM 1276 / 107).